We begin with the raw amino-acid sequence, 413 residues long: MTDSKYPGLLERFIKYAKVETRSDDQSKTVPSSPKETAFLKQLAAELTELGLENVRIHPQNSYLLATIPANIDRPVPVMGLLAHVDTADFNAENVNPQVVEDYDGQSDIPLGDSGYKLTIDEFPSLKKYAGQTLVTTDGTTLLGADDKAGVAEIITLAAYLKEHPEIKHGQIQIGLGPDEEIGTGADHFDVKDFGADFAYTIDGGPLGELEDETFNAAQAEIDIQGKDVHTGTAKDTMVNAIQVGIDLQNQLPVHDRPEKTADREGFYHLYKFDGTVDHARLVYLIRDHDKKLFEARKEALRAIVRDLNANLGEDRISLNLYDQYYNLKDALKGHEDVVELAKKAMEDLGIKPDIYPVRGGTDGSTISYLGLPTPNLFAGGENMHSRFEYVSVQTMEKAVDVLLKMIALNAEE.

Residue His84 participates in Zn(2+) binding. Asp86 is a catalytic residue. Asp146 contacts Zn(2+). Glu180 acts as the Proton acceptor in catalysis. 3 residues coordinate Zn(2+): Glu181, Asp203, and His385.

Belongs to the peptidase M20B family. Zn(2+) serves as cofactor.

It is found in the cytoplasm. It carries out the reaction Release of the N-terminal residue from a tripeptide.. Cleaves the N-terminal amino acid of tripeptides. The sequence is that of Peptidase T from Limosilactobacillus fermentum (strain NBRC 3956 / LMG 18251) (Lactobacillus fermentum).